Consider the following 233-residue polypeptide: uncharacterized protein (233 aa).

The chain crosses the membrane as a helical span at residues 21–41; sequence LNILIAIVSILIVVVAANLFI. The interval 44 to 163 is disordered; sequence PSSKDVSKDS…GEHAATYDSS (120 aa). Basic and acidic residues-rich tracts occupy residues 48-57, 66-108, and 135-144; these read DVSKDSETAQ, KTEK…KKDD, and DVEKTYENPD.

Its subcellular location is the cell membrane. This is an uncharacterized protein from Bacillus subtilis (strain 168).